Consider the following 393-residue polypeptide: Na(+)/H(+) antiporter NhaA (393 aa).

Transmembrane regions (helical) follow at residues 18-38, 65-85, 101-121, 131-151, 160-180, 184-204, 210-230, 260-280, 298-318, 334-354, and 369-389; these read AGGV…NSPW, MLIW…GLEI, MLPA…YAAI, GWGI…VLLG, VFLT…IAFF, NLSP…LGLN, AVGP…KSGI, ALQP…NAGV, IAFG…WLLI, FFGV…IGSL, and IGVL…LLAS.

The protein belongs to the NhaA Na(+)/H(+) (TC 2.A.33) antiporter family.

Its subcellular location is the cell inner membrane. The catalysed reaction is Na(+)(in) + 2 H(+)(out) = Na(+)(out) + 2 H(+)(in). Its function is as follows. Na(+)/H(+) antiporter that extrudes sodium in exchange for external protons. This is Na(+)/H(+) antiporter NhaA from Albidiferax ferrireducens (strain ATCC BAA-621 / DSM 15236 / T118) (Rhodoferax ferrireducens).